Consider the following 211-residue polypeptide: Uridine kinase (211 aa).

Position 12–19 (12–19 (GGSGSGKT)) interacts with ATP.

It belongs to the uridine kinase family.

It is found in the cytoplasm. The enzyme catalyses uridine + ATP = UMP + ADP + H(+). It carries out the reaction cytidine + ATP = CMP + ADP + H(+). Its pathway is pyrimidine metabolism; CTP biosynthesis via salvage pathway; CTP from cytidine: step 1/3. The protein operates within pyrimidine metabolism; UMP biosynthesis via salvage pathway; UMP from uridine: step 1/1. This Bacillus subtilis (strain 168) protein is Uridine kinase (udk).